We begin with the raw amino-acid sequence, 213 residues long: Probable transaldolase (213 aa).

The Schiff-base intermediate with substrate role is filled by Lys83.

The protein belongs to the transaldolase family. Type 3B subfamily.

It localises to the cytoplasm. The catalysed reaction is D-sedoheptulose 7-phosphate + D-glyceraldehyde 3-phosphate = D-erythrose 4-phosphate + beta-D-fructose 6-phosphate. Its pathway is carbohydrate degradation; pentose phosphate pathway; D-glyceraldehyde 3-phosphate and beta-D-fructose 6-phosphate from D-ribose 5-phosphate and D-xylulose 5-phosphate (non-oxidative stage): step 2/3. Its function is as follows. Transaldolase is important for the balance of metabolites in the pentose-phosphate pathway. The protein is Probable transaldolase of Oceanobacillus iheyensis (strain DSM 14371 / CIP 107618 / JCM 11309 / KCTC 3954 / HTE831).